A 597-amino-acid polypeptide reads, in one-letter code: Probable serine/threonine-protein kinase DDB_G0281745 (597 aa).

The segment covering 49–61 (TIDNSNGKQSTTP) has biased composition (polar residues). Residues 49–320 (TIDNSNGKQS…RNNESTATTA (272 aa)) form a disordered region. The segment covering 72 to 97 (QPPPQQSQQQPPQPLKPIPATRPVPT) has biased composition (pro residues). Residues 114 to 140 (TLPTTNSSTKYSTLPSRQFFEVSSSPG) are compositionally biased toward polar residues. Residues 157-168 (SLSSNQNGSNLN) show a composition bias toward low complexity. The segment covering 208-234 (PSPPSPPLQSPQPTPQQQPPPLKPIPQ) has biased composition (pro residues). A compositionally biased stretch (low complexity) spans 235 to 264 (PQQQQQQQQQQQQQQQQQQQQQQQQQQQQQ). Over residues 265-274 (QPPPLKPIPQ) the composition is skewed to pro residues. Residues 275-301 (PQQSQPTQPIKSQIQIPITNTNGNTNG) show a composition bias toward low complexity. Residues 334–585 (KFVGNEIGSG…KVLDTIQNIY (252 aa)) form the Protein kinase domain. ATP is bound by residues 340 to 348 (IGSGKYGSV) and K361. D454 (proton acceptor) is an active-site residue.

The protein belongs to the protein kinase superfamily. TKL Ser/Thr protein kinase family.

The enzyme catalyses L-seryl-[protein] + ATP = O-phospho-L-seryl-[protein] + ADP + H(+). It carries out the reaction L-threonyl-[protein] + ATP = O-phospho-L-threonyl-[protein] + ADP + H(+). The chain is Probable serine/threonine-protein kinase DDB_G0281745 from Dictyostelium discoideum (Social amoeba).